The sequence spans 81 residues: MSILQIVAIVAIIVALILAIVVWTIVYIEYKRLLRQRKIDWLIDRIRERAEDSGNESEGDTEELSTLVEMEPDNFRNDNDM.

Over 1 to 7 the chain is Extracellular; it reads MSILQIV. Residues 8–28 traverse the membrane as a helical segment; it reads AIVAIIVALILAIVVWTIVYI. The Cytoplasmic portion of the chain corresponds to 29–81; that stretch reads EYKRLLRQRKIDWLIDRIRERAEDSGNESEGDTEELSTLVEMEPDNFRNDNDM. The segment at 50-81 is disordered; that stretch reads AEDSGNESEGDTEELSTLVEMEPDNFRNDNDM. A phosphoserine; by host CK2 mark is found at S53 and S57. Positions 53–63 are enriched in acidic residues; the sequence is SGNESEGDTEE.

Belongs to the HIV-1 VPU protein family. In terms of assembly, homopentamer. Interacts with host CD4 and BRTC; these interactions induce proteasomal degradation of CD4. Interacts with host BST2; this interaction leads to the degradation of host BST2. Interacts with host FBXW11. Interacts with host AP1M1; this interaction plays a role in the mistrafficking and subsequent degradation of host BST2. Interacts with host RANBP2; this interaction allows Vpu to down-regulate host BLM sumoylation. In terms of processing, phosphorylated by host CK2. This phosphorylation is necessary for interaction with human BTRC and degradation of CD4.

Its subcellular location is the host membrane. Ion channel activity is inhibited by hexamethylene amiloride in vitro. Enhances virion budding by targeting host CD4 and Tetherin/BST2 to proteasome degradation. Degradation of CD4 prevents any unwanted premature interactions between viral Env and its host receptor CD4 in the endoplasmic reticulum. Degradation of antiretroviral protein Tetherin/BST2 is important for virion budding, as BST2 tethers new viral particles to the host cell membrane. Mechanistically, Vpu bridges either CD4 or BST2 to BTRC, a substrate recognition subunit of the Skp1/Cullin/F-box protein E3 ubiquitin ligase, induces their ubiquitination and subsequent proteasomal degradation. The alteration of the E3 ligase specificity by Vpu seems to promote the degradation of host IKBKB, leading to NF-kappa-B down-regulation and subsequent apoptosis. Acts as a viroporin that forms an oligomeric ion channel in membranes. Modulates the host DNA repair mechanisms to promote degradation of nuclear viral cDNA in cells that are already productively infected in order to suppress immune sensing and proviral hyper-integration (superinfection). Manipulates PML-NBs and modulates SUMOylation of host BLM protein thereby enhancing its DNA-end processing activity toward viral unintegrated linear DNA. Also inhibits RAD52-mediated homologous repair of viral cDNA, preventing the generation of dead-end circular forms of single copies of the long terminal repeat and permitting sustained nucleolytic attack. In Human immunodeficiency virus type 1 (HIV-1), this protein is Protein Vpu.